We begin with the raw amino-acid sequence, 226 residues long: uncharacterized protein (226 aa).

A run of 4 helical transmembrane segments spans residues 25–45 (ALAW…IFLI), 54–74 (FLLF…YFIF), 107–127 (ELFL…YFFI), and 153–173 (TITI…CFSS).

The protein resides in the cell membrane. This is an uncharacterized protein from Mycoplasma genitalium (strain ATCC 33530 / DSM 19775 / NCTC 10195 / G37) (Mycoplasmoides genitalium).